Reading from the N-terminus, the 420-residue chain is Threonine aspartase 1 (420 aa).

The segment at 1–23 is disordered; that stretch reads MTMEKGMSSGEGLPSRSSQVSAG. Catalysis depends on Thr234, which acts as the Nucleophile.

Belongs to the Ntn-hydrolase family. Intramolecular proteolysis generates 2 subunits, alpha and beta, which reassemble through a non-covalent association to form the fully active enzyme.

Its function is as follows. Protease responsible for KMT2A/MLL1 processing and activation. It also activates KMT2D/MLL2. Through substrate activation, it controls the expression of HOXA genes, and the expression of key cell cycle regulators including CCNA1, CCNB1, CCNE1 and CDKN2A. In Homo sapiens (Human), this protein is Threonine aspartase 1 (TASP1).